A 458-amino-acid polypeptide reads, in one-letter code: NADH-ubiquinone oxidoreductase chain 4 (458 aa).

Helical transmembrane passes span 22–42 (FFWT…FIFT), 63–83 (MISA…ALAS), 96–116 (LLYI…FLST), 117–137 (NLMN…LIIF), 150–170 (IYLS…LLFL), 194–214 (ILWL…GFHL), 224–244 (TIAG…YGMI), 257–277 (LSLI…FICL), 284–306 (ALIA…TLSL), 311–333 (GAFI…ANSN), 350–370 (MLLP…LAMP), 391–413 (LTFP…MFML), and 434–454 (LTLF…NMII).

It belongs to the complex I subunit 4 family.

It is found in the mitochondrion membrane. The catalysed reaction is a ubiquinone + NADH + 5 H(+)(in) = a ubiquinol + NAD(+) + 4 H(+)(out). Functionally, core subunit of the mitochondrial membrane respiratory chain NADH dehydrogenase (Complex I) that is believed to belong to the minimal assembly required for catalysis. Complex I functions in the transfer of electrons from NADH to the respiratory chain. The immediate electron acceptor for the enzyme is believed to be ubiquinone. The chain is NADH-ubiquinone oxidoreductase chain 4 (MT-ND4) from Myxine glutinosa (Atlantic hagfish).